Reading from the N-terminus, the 273-residue chain is 2,3,4,5-tetrahydropyridine-2,6-dicarboxylate N-succinyltransferase (273 aa).

This sequence belongs to the transferase hexapeptide repeat family.

The protein localises to the cytoplasm. The catalysed reaction is (S)-2,3,4,5-tetrahydrodipicolinate + succinyl-CoA + H2O = (S)-2-succinylamino-6-oxoheptanedioate + CoA. Its pathway is amino-acid biosynthesis; L-lysine biosynthesis via DAP pathway; LL-2,6-diaminopimelate from (S)-tetrahydrodipicolinate (succinylase route): step 1/3. The sequence is that of 2,3,4,5-tetrahydropyridine-2,6-dicarboxylate N-succinyltransferase from Bordetella petrii (strain ATCC BAA-461 / DSM 12804 / CCUG 43448).